The primary structure comprises 235 residues: Large ribosomal subunit protein uL1 (235 aa).

It belongs to the universal ribosomal protein uL1 family. In terms of assembly, part of the 50S ribosomal subunit.

In terms of biological role, binds directly to 23S rRNA. The L1 stalk is quite mobile in the ribosome, and is involved in E site tRNA release. Its function is as follows. Protein L1 is also a translational repressor protein, it controls the translation of the L11 operon by binding to its mRNA. This Nitratidesulfovibrio vulgaris (strain ATCC 29579 / DSM 644 / CCUG 34227 / NCIMB 8303 / VKM B-1760 / Hildenborough) (Desulfovibrio vulgaris) protein is Large ribosomal subunit protein uL1.